The sequence spans 209 residues: Mitochondrial import inner membrane translocase subunit Tim23 (209 aa).

The next 3 helical transmembrane spans lie at 73-93, 125-145, and 181-197; these read FELAFFTIGGCCMTGAAFGAM, ALWANTLGSLALLYSAFGVII, and GLTGLTLTSLYALYNNW.

This sequence belongs to the Tim17/Tim22/Tim23 family. Component of the TIM23 complex at least composed of TIMM23, TIMM17 (TIMM17A or TIMM17B) and TIMM50; within this complex, directly interacts with TIMM50. The complex interacts with the TIMM44 component of the PAM complex and with DNAJC15. Upon mitochondrial depolarization, interacts with PINK1; the interaction is required for PINK1 accumulation at the outer mitochondrial membrane, kinase activation by autophosphorylation and PRKN recruitement to mitochondria.

The protein resides in the mitochondrion inner membrane. Its function is as follows. Essential component of the TIM23 complex, a complex that mediates the translocation of transit peptide-containing proteins across the mitochondrial inner membrane. Has a role in the activation of stress-induced mitophagy by protecting PINK1 from OMA1-mediated degradation and facilitating its accumulation at the outer mitochondrial membrane in response to depolarization. The polypeptide is Mitochondrial import inner membrane translocase subunit Tim23 (TIMM23) (Homo sapiens (Human)).